A 313-amino-acid chain; its full sequence is Ribosomal RNA small subunit methyltransferase H (313 aa).

S-adenosyl-L-methionine contacts are provided by residues 37 to 39 (GGH), Asp-57, Phe-82, Asp-104, and Gln-111.

It belongs to the methyltransferase superfamily. RsmH family.

Its subcellular location is the cytoplasm. It carries out the reaction cytidine(1402) in 16S rRNA + S-adenosyl-L-methionine = N(4)-methylcytidine(1402) in 16S rRNA + S-adenosyl-L-homocysteine + H(+). Its function is as follows. Specifically methylates the N4 position of cytidine in position 1402 (C1402) of 16S rRNA. The chain is Ribosomal RNA small subunit methyltransferase H from Alteromonas mediterranea (strain DSM 17117 / CIP 110805 / LMG 28347 / Deep ecotype).